Reading from the N-terminus, the 435-residue chain is Serine/threonine-protein kinase 40 (435 aa).

One can recognise a Protein kinase domain in the interval 35–332; sequence FILGPRLGNS…EELDSLSSII (298 aa). Residues 41-49 and Lys66 each bind ATP; that span reads LGNSPVPSI. The Proton acceptor role is filled by Asp197.

The protein belongs to the protein kinase superfamily. CAMK Ser/Thr protein kinase family.

The protein localises to the nucleus. It is found in the cytoplasm. It catalyses the reaction L-seryl-[protein] + ATP = O-phospho-L-seryl-[protein] + ADP + H(+). The enzyme catalyses L-threonyl-[protein] + ATP = O-phospho-L-threonyl-[protein] + ADP + H(+). Functionally, may be a negative regulator of NF-kappa-B and p53-mediated gene transcription. The sequence is that of Serine/threonine-protein kinase 40 (STK40) from Gallus gallus (Chicken).